Consider the following 505-residue polypeptide: Probable inorganic carbon transporter subunit DabB (505 aa).

13 helical membrane passes run 9–29 (SLLT…LLFL), 37–57 (FVRI…LILA), 68–88 (WHLD…GFII), 105–123 (YFTL…WLSG), 162–182 (LFLL…HATG), 204–224 (TGIQ…WPFQ), 231–251 (IVAP…AGGI), 259–279 (LFHG…SVLI), 303–323 (GFML…HLIL), 355–375 (LWVM…WLTA), 382–402 (LISA…LVAF), 410–430 (IAGL…HHLF), and 446–466 (MSAV…GTWV).

This sequence belongs to the inorganic carbon transporter (TC 9.A.2) DabB family. Forms a complex with DabA.

Its subcellular location is the cell membrane. Functionally, part of an energy-coupled inorganic carbon pump. The sequence is that of Probable inorganic carbon transporter subunit DabB from Bacillus subtilis (strain 168).